The primary structure comprises 67 residues: LPS-assembly lipoprotein LptM (67 aa).

Residues 1 to 19 (MKNVFKALTVLLTLFSLTG) form the signal peptide. Cysteine 20 is lipidated: N-palmitoyl cysteine. Cysteine 20 carries the S-diacylglycerol cysteine lipid modification. A disordered region spans residues 26–67 (LYFPPADKNAPPPTKPVETQTQSTVPDKNDRATGDGPSQVNY). A compositionally biased stretch (polar residues) spans 42-51 (VETQTQSTVP).

It belongs to the LptM family. Interacts with the outer membrane embedded portion of the LPS translocon formed by LptD and LptE (LptDE).

Its subcellular location is the cell outer membrane. In terms of biological role, component of the lipopolysaccharide (LPS) transport (Lpt) pathway that promotes efficient assembly of the outer membrane LPS translocon (LptDE) by the BAM complex. Facilitates oxidative maturation of LptD by stabilizing a conformation of the LPS translocon in which LptD can efficiently acquire native disulfide bonds, thereby activating the LPS translocon. This chain is LPS-assembly lipoprotein LptM, found in Escherichia coli O157:H7.